Consider the following 308-residue polypeptide: N-acetylmuramic acid 6-phosphate etherase (308 aa).

The SIS domain occupies 63–226; sequence IVDAFACGGR…STASMIRSGK (164 aa). Glu91 acts as the Proton donor in catalysis. The active site involves Glu122.

This sequence belongs to the GCKR-like family. MurNAc-6-P etherase subfamily. Homodimer.

The catalysed reaction is N-acetyl-D-muramate 6-phosphate + H2O = N-acetyl-D-glucosamine 6-phosphate + (R)-lactate. It participates in amino-sugar metabolism; 1,6-anhydro-N-acetylmuramate degradation. Its pathway is amino-sugar metabolism; N-acetylmuramate degradation. It functions in the pathway cell wall biogenesis; peptidoglycan recycling. Its function is as follows. Specifically catalyzes the cleavage of the D-lactyl ether substituent of MurNAc 6-phosphate, producing GlcNAc 6-phosphate and D-lactate. Together with AnmK, is also required for the utilization of anhydro-N-acetylmuramic acid (anhMurNAc) either imported from the medium or derived from its own cell wall murein, and thus plays a role in cell wall recycling. This is N-acetylmuramic acid 6-phosphate etherase from Colwellia psychrerythraea (strain 34H / ATCC BAA-681) (Vibrio psychroerythus).